A 131-amino-acid polypeptide reads, in one-letter code: Large ribosomal subunit protein bL17 (131 aa).

Belongs to the bacterial ribosomal protein bL17 family. In terms of assembly, part of the 50S ribosomal subunit. Contacts protein L32.

The chain is Large ribosomal subunit protein bL17 from Shewanella sp. (strain ANA-3).